We begin with the raw amino-acid sequence, 695 residues long: Segment polarity protein dishevelled homolog DVL-1 (695 aa).

The DIX domain occupies 1–85; the sequence is MAETKIIYHM…RVVSWLVLAE (85 aa). Residues 89-237 are disordered; it reads SDAGSQGTDS…LRQADRASSF (149 aa). Residues 142–151 are compositionally biased toward basic residues; sequence SHRRERARRR. Over residues 152–171 the composition is skewed to basic and acidic residues; the sequence is NREEAARTNGHPRGDRRRDV. The span at 176-192 shows a compositional bias: low complexity; that stretch reads DSASTALSSELESSSFV. Position 194 is a phosphoserine (Ser-194). A compositionally biased stretch (low complexity) spans 200–214; it reads TSRLSSSTEQSTSSR. The span at 215 to 228 shows a compositional bias: basic residues; sequence LIRKHKRRRRKQRL. A PDZ domain is found at 251–323; it reads TVTLNMERHH…NDDAVRVLRE (73 aa). Residues 425–499 form the DEP domain; that stretch reads PDSGLEIRDR…SEQCYYVFGD (75 aa). A disordered region spans residues 543-667; sequence PGPPPCFPPA…PGGPPVRELA (125 aa). Positions 551 to 580 are enriched in low complexity; that stretch reads PAYQDPGFSYGSGSTGSQQSEGSKSSGSTR. Residues 625 to 636 are compositionally biased toward polar residues; it reads SRGSSPRSQASA.

It belongs to the DSH family. As to quaternary structure, interacts with CXXC4. Interacts (via PDZ domain) with NXN. Interacts with BRD7 and INVS. Interacts (via PDZ domain) with VANGL1 and VANGL2 (via C-terminus). Interacts with ARRB1; the interaction is enhanced by phosphorylation of DVL1. Interacts with CYLD. Interacts (via PDZ domain) with RYK. Self-associates (via DIX domain) and forms higher homooligomers. Interacts (via PDZ domain) with DACT1 and FZD7, where DACT1 and FZD7 compete for the same binding site. Interacts (via DEP domain) with MUSK; the interaction is direct and mediates the formation a DVL1, MUSK and PAK1 ternary complex involved in AChR clustering. Interacts (via PDZ domain) with TMEM88. Interacts with DCDC2. Interacts with FOXK2. Interacts with PKD1 (via extracellular domain). Interacts (via PDZ domain) with CCDC88C/DAPLE; competes with CCDC88C for binding to frizzled receptor FZD7 and dissociates from CCDC88C following initiation of non-canonical Wnt signaling when CCDC88C displaces DVL1 from ligand-activated FZD7. In terms of processing, ubiquitinated; undergoes both 'Lys-48'-linked ubiquitination, leading to its subsequent degradation by the ubiquitin-proteasome pathway, and 'Lys-63'-linked ubiquitination. The interaction with INVS is required for ubiquitination. Deubiquitinated by CYLD, which acts on 'Lys-63'-linked ubiquitin chains.

The protein localises to the cell membrane. The protein resides in the cytoplasm. It localises to the cytosol. Its subcellular location is the cytoplasmic vesicle. Participates in Wnt signaling by binding to the cytoplasmic C-terminus of frizzled family members and transducing the Wnt signal to down-stream effectors. Plays a role both in canonical and non-canonical Wnt signaling. Plays a role in the signal transduction pathways mediated by multiple Wnt genes. Required for LEF1 activation upon WNT1 and WNT3A signaling. DVL1 and PAK1 form a ternary complex with MUSK which is important for MUSK-dependent regulation of AChR clustering during the formation of the neuromuscular junction (NMJ). In Homo sapiens (Human), this protein is Segment polarity protein dishevelled homolog DVL-1 (DVL1).